The primary structure comprises 300 residues: MSDPNVNDAIEPVESVEDELGTVEGADNEDTEASAEAEAADDTVVAETDEDATDAEADETAEATDAEATEAEADADADAAEAEESEEEPEAEEPELDPIEKLRQELRVLPGEWYVIHTYAGYENRVKTNLEQRAVSLNVEDYIFQAEVPQEEVVQIKNGDRKTIRQNKLPGYVLVRMDLTNESWGVVRNTPGVTGFVGNAYDPYPLTLDEIVKMLAPEAEEKAAREAAEAEGKPAPQRKVEVQVLDFEVGDSVTVTDGPFATLQATINEINADSKKVKGLVEIFGRETPVELSFDQIQKN.

Positions 1–99 (MSDPNVNDAI…EAEEPELDPI (99 aa)) are disordered. Acidic residues-rich tracts occupy residues 14–41 (ESVE…EAAD) and 47–97 (ETDE…PELD).

Belongs to the NusG family.

Its function is as follows. Participates in transcription elongation, termination and antitermination. In Streptomyces coelicolor (strain ATCC BAA-471 / A3(2) / M145), this protein is Transcription termination/antitermination protein NusG.